The following is a 209-amino-acid chain: Thymidylate kinase (209 aa).

Residue 10–17 (GLDGAGKS) participates in ATP binding.

This sequence belongs to the thymidylate kinase family.

The enzyme catalyses dTMP + ATP = dTDP + ADP. Functionally, phosphorylation of dTMP to form dTDP in both de novo and salvage pathways of dTTP synthesis. The chain is Thymidylate kinase from Francisella tularensis subsp. tularensis (strain FSC 198).